We begin with the raw amino-acid sequence, 642 residues long: Threonine--tRNA ligase (642 aa).

Residues 1–61 (MPVITLPDGS…VDDASVAIIT (61 aa)) enclose the TGS domain. A catalytic region spans residues 243–534 (DHRKIGKQLD…LTEEYAGFFP (292 aa)). Residues Cys334, His385, and His511 each coordinate Zn(2+).

It belongs to the class-II aminoacyl-tRNA synthetase family. As to quaternary structure, homodimer. The cofactor is Zn(2+).

It localises to the cytoplasm. The enzyme catalyses tRNA(Thr) + L-threonine + ATP = L-threonyl-tRNA(Thr) + AMP + diphosphate + H(+). In terms of biological role, catalyzes the attachment of threonine to tRNA(Thr) in a two-step reaction: L-threonine is first activated by ATP to form Thr-AMP and then transferred to the acceptor end of tRNA(Thr). Also edits incorrectly charged L-seryl-tRNA(Thr). The polypeptide is Threonine--tRNA ligase (Erwinia tasmaniensis (strain DSM 17950 / CFBP 7177 / CIP 109463 / NCPPB 4357 / Et1/99)).